A 563-amino-acid chain; its full sequence is NAD(P)H-quinone oxidoreductase chain 4 (563 aa).

A run of 15 helical transmembrane segments spans residues 25–45 (FPWL…VPFI), 56–76 (WFAL…YLYG), 90–110 (VSWL…ISMP), 111–131 (LILL…PVTF), 133–153 (PKLF…VFAV), 157–177 (LLFF…LAIW), 189–209 (FIIY…AMGF), 230–250 (GFQL…LPIV), 264–284 (TAPV…YALM), 298–318 (FAPL…LTSF), 335–355 (MGFV…GAML), 356–376 (QMIS…ATYD), 397–417 (FALW…SGFV), 438–458 (IVIA…LLSM), and 485–505 (VYII…PRLM).

The protein belongs to the complex I subunit 4 family.

It localises to the cellular thylakoid membrane. The enzyme catalyses a plastoquinone + NADH + (n+1) H(+)(in) = a plastoquinol + NAD(+) + n H(+)(out). The catalysed reaction is a plastoquinone + NADPH + (n+1) H(+)(in) = a plastoquinol + NADP(+) + n H(+)(out). In terms of biological role, NDH-1 shuttles electrons from NAD(P)H, via FMN and iron-sulfur (Fe-S) centers, to quinones in the respiratory chain. The immediate electron acceptor for the enzyme in this species is believed to be plastoquinone. Couples the redox reaction to proton translocation (for every two electrons transferred, four hydrogen ions are translocated across the cytoplasmic membrane), and thus conserves the redox energy in a proton gradient. The polypeptide is NAD(P)H-quinone oxidoreductase chain 4 (Prochlorococcus marinus (strain MIT 9313)).